The following is a 554-amino-acid chain: Calcium/calmodulin-dependent protein kinase type II delta 2 chain (554 aa).

In terms of domain architecture, Protein kinase spans 13 to 271; the sequence is YQLFEELGKG…AAEAPKHPWI (259 aa). ATP contacts are provided by residues 19-27 and Lys42; that span reads LGKGAFSVV. The active-site Proton acceptor is Asp135. Residue Thr286 is modified to Phosphothreonine. Residues Ser314 and Ser318 each carry the phosphoserine modification. 2 disordered regions span residues 324-375 and 392-413; these read PDGV…TIED and WQPS…SSVQ. Polar residues predominate over residues 330-340; that stretch reads NNKTNLASSPK. At Thr372 the chain carries Phosphothreonine.

This sequence belongs to the protein kinase superfamily. CAMK Ser/Thr protein kinase family. CaMK subfamily. CAMK2 is composed of four different chains: alpha, beta, gamma, and delta. The different isoforms assemble into homo- or heteromultimeric holoenzymes composed of 8 to 12 subunits. First detected at 18 hpf. At 24 hpf, expressed in discrete anterior locations and along either side of the midline. At 48 hpf, expression is predominantly in the forebrain, and then accumulates in the forebrain, hindbrain, and retinal epithelium at 72 hpf.

It carries out the reaction L-seryl-[protein] + ATP = O-phospho-L-seryl-[protein] + ADP + H(+). The enzyme catalyses L-threonyl-[protein] + ATP = O-phospho-L-threonyl-[protein] + ADP + H(+). With respect to regulation, autophosphorylation of CAMK2 plays an important role in the regulation of the kinase activity. Functionally, caM-kinase II (CAMK2) is a prominent kinase in the central nervous system. This Danio rerio (Zebrafish) protein is Calcium/calmodulin-dependent protein kinase type II delta 2 chain (camk2d2).